The primary structure comprises 456 residues: Kynurenine 3-monooxygenase (456 aa).

The protein belongs to the aromatic-ring hydroxylase family. KMO subfamily. It depends on FAD as a cofactor.

It localises to the mitochondrion outer membrane. It catalyses the reaction L-kynurenine + NADPH + O2 + H(+) = 3-hydroxy-L-kynurenine + NADP(+) + H2O. It functions in the pathway cofactor biosynthesis; NAD(+) biosynthesis; quinolinate from L-kynurenine: step 1/3. In terms of biological role, catalyzes the hydroxylation of L-kynurenine (L-Kyn) to form 3-hydroxy-L-kynurenine (L-3OHKyn). Required for synthesis of quinolinic acid. The protein is Kynurenine 3-monooxygenase of Candida albicans (strain SC5314 / ATCC MYA-2876) (Yeast).